The following is a 467-amino-acid chain: Mitochondrial distribution and morphology protein 10 (467 aa).

The interval 361 to 393 (GLPDTAPSRNRECDDLPPPRRDNYHHQRSPHAS) is disordered. The span at 369–385 (RNRECDDLPPPRRDNYH) shows a compositional bias: basic and acidic residues.

It belongs to the MDM10 family. Component of the ER-mitochondria encounter structure (ERMES) or MDM complex, composed of MMM1, MDM10, MDM12 and MDM34. Associates with the mitochondrial outer membrane sorting assembly machinery SAM(core) complex.

It localises to the mitochondrion outer membrane. Component of the ERMES/MDM complex, which serves as a molecular tether to connect the endoplasmic reticulum and mitochondria. Components of this complex are involved in the control of mitochondrial shape and protein biogenesis and may function in phospholipid exchange. MDM10 is involved in the late assembly steps of the general translocase of the mitochondrial outer membrane (TOM complex). Functions in the TOM40-specific route of the assembly of outer membrane beta-barrel proteins, including the association of TOM40 with the receptor TOM22 and small TOM proteins. Can associate with the SAM(core) complex as well as the MDM12-MMM1 complex, both involved in late steps of the major beta-barrel assembly pathway, that is responsible for biogenesis of all outer membrane beta-barrel proteins. May act as a switch that shuttles between both complexes and channels precursor proteins into the TOM40-specific pathway. Plays a role in mitochondrial morphology and in the inheritance of mitochondria. This is Mitochondrial distribution and morphology protein 10 from Ajellomyces capsulatus (strain NAm1 / WU24) (Darling's disease fungus).